Here is an 89-residue protein sequence, read N- to C-terminus: DNA/RNA-binding protein Alba (89 aa).

It belongs to the histone-like Alba family.

Its subcellular location is the cytoplasm. It is found in the chromosome. Its function is as follows. Binds double-stranded DNA tightly but without sequence specificity. Involved in DNA compaction. The protein is DNA/RNA-binding protein Alba of Methanococcus maripaludis (strain DSM 14266 / JCM 13030 / NBRC 101832 / S2 / LL).